A 402-amino-acid polypeptide reads, in one-letter code: Elongation factor Tu (402 aa).

The 196-residue stretch at 16–211 (KEHINIGTIG…AVDSYIDSPV (196 aa)) folds into the tr-type G domain. Residues 25-32 (GHVDHGKT) are G1. 25–32 (GHVDHGKT) serves as a coordination point for GTP. Threonine 32 contributes to the Mg(2+) binding site. The G2 stretch occupies residues 66–70 (GITIN). The segment at 87–90 (DCPG) is G3. Residues 87–91 (DCPGH) and 142–145 (NKID) each bind GTP. The interval 142–145 (NKID) is G4. The segment at 181 to 183 (SAR) is G5.

The protein belongs to the TRAFAC class translation factor GTPase superfamily. Classic translation factor GTPase family. EF-Tu/EF-1A subfamily. Monomer.

It is found in the cytoplasm. It catalyses the reaction GTP + H2O = GDP + phosphate + H(+). In terms of biological role, GTP hydrolase that promotes the GTP-dependent binding of aminoacyl-tRNA to the A-site of ribosomes during protein biosynthesis. This chain is Elongation factor Tu, found in Mesomycoplasma hyopneumoniae (strain J / ATCC 25934 / NCTC 10110) (Mycoplasma hyopneumoniae).